Here is a 216-residue protein sequence, read N- to C-terminus: Endo-1,4-beta-xylanase 2 (216 aa).

Residues 1 to 27 (MVSFSSLFVAACAAVTAFALPNELEKR) form the signal peptide. The GH11 domain occupies 28-216 (AITSNEQGTN…SSGSASITVS (189 aa)). N-linked (GlcNAc...) asparagine glycosylation occurs at asparagine 87. Catalysis depends on glutamate 112, which acts as the Nucleophile. The active-site Proton donor is glutamate 203.

It belongs to the glycosyl hydrolase 11 (cellulase G) family.

The protein localises to the secreted. It carries out the reaction Endohydrolysis of (1-&gt;4)-beta-D-xylosidic linkages in xylans.. It participates in glycan degradation; xylan degradation. Endo-1,4-beta-xylanase involved in the hydrolysis of xylan, a major structural heterogeneous polysaccharide found in plant biomass representing the second most abundant polysaccharide in the biosphere, after cellulose. This Rhizopus oryzae (Mucormycosis agent) protein is Endo-1,4-beta-xylanase 2 (xyn2).